We begin with the raw amino-acid sequence, 644 residues long: Putative aldehyde dehydrogenase-like protein YHR039C (644 aa).

N15 carries N-linked (GlcNAc...) asparagine glycosylation. E354 (proton acceptor) is an active-site residue. Residue C389 is the Nucleophile of the active site. N565 and N627 each carry an N-linked (GlcNAc...) asparagine glycan.

This sequence belongs to the aldehyde dehydrogenase family. Post-translationally, N-glycosylated.

It localises to the endoplasmic reticulum. The chain is Putative aldehyde dehydrogenase-like protein YHR039C (MSC7) from Saccharomyces cerevisiae (strain ATCC 204508 / S288c) (Baker's yeast).